Reading from the N-terminus, the 339-residue chain is Phosphate acyltransferase (339 aa).

Belongs to the PlsX family. As to quaternary structure, homodimer. Probably interacts with PlsY.

It localises to the cytoplasm. The catalysed reaction is a fatty acyl-[ACP] + phosphate = an acyl phosphate + holo-[ACP]. It participates in lipid metabolism; phospholipid metabolism. Its function is as follows. Catalyzes the reversible formation of acyl-phosphate (acyl-PO(4)) from acyl-[acyl-carrier-protein] (acyl-ACP). This enzyme utilizes acyl-ACP as fatty acyl donor, but not acyl-CoA. This Methylococcus capsulatus (strain ATCC 33009 / NCIMB 11132 / Bath) protein is Phosphate acyltransferase.